Consider the following 481-residue polypeptide: ATP synthase subunit beta, chloroplastic (481 aa).

Position 161–168 (161–168 (GGAGVGKT)) interacts with ATP.

It belongs to the ATPase alpha/beta chains family. As to quaternary structure, F-type ATPases have 2 components, CF(1) - the catalytic core - and CF(0) - the membrane proton channel. CF(1) has five subunits: alpha(3), beta(3), gamma(1), delta(1), epsilon(1). CF(0) has four main subunits: a(1), b(1), b'(1) and c(9-12).

Its subcellular location is the plastid. The protein localises to the chloroplast thylakoid membrane. The catalysed reaction is ATP + H2O + 4 H(+)(in) = ADP + phosphate + 5 H(+)(out). Functionally, produces ATP from ADP in the presence of a proton gradient across the membrane. The catalytic sites are hosted primarily by the beta subunits. In Dictyota dichotoma, this protein is ATP synthase subunit beta, chloroplastic.